Here is a 374-residue protein sequence, read N- to C-terminus: Glutamate 5-kinase (374 aa).

Lys-9 provides a ligand contact to ATP. Positions 49, 136, and 148 each coordinate substrate. ATP is bound by residues 168–169 (TD) and 210–216 (TGGMRSK). The 79-residue stretch at 276–354 (AGMITVDSGA…EEARQYSYLH (79 aa)) folds into the PUA domain.

It belongs to the glutamate 5-kinase family.

It localises to the cytoplasm. It catalyses the reaction L-glutamate + ATP = L-glutamyl 5-phosphate + ADP. Its pathway is amino-acid biosynthesis; L-proline biosynthesis; L-glutamate 5-semialdehyde from L-glutamate: step 1/2. Functionally, catalyzes the transfer of a phosphate group to glutamate to form L-glutamate 5-phosphate. The protein is Glutamate 5-kinase of Geobacillus kaustophilus (strain HTA426).